The sequence spans 434 residues: Elongation factor 1-alpha (434 aa).

One can recognise a tr-type G domain in the interval 5–232 (KPHINLVVIG…DNVHPPKRPV (228 aa)). The interval 14-21 (GHVVAGKS) is G1. Residue 14-21 (GHVVAGKS) coordinates GTP. Residues 70–74 (GITID) are G2. Residues 91–94 (DAPG) form a G3 region. GTP-binding positions include 91–95 (DAPGH) and 153–156 (NKMD). Positions 153–156 (NKMD) are G4. Residues 196-198 (SGF) are G5.

It belongs to the TRAFAC class translation factor GTPase superfamily. Classic translation factor GTPase family. EF-Tu/EF-1A subfamily.

The protein resides in the cytoplasm. Its function is as follows. This protein promotes the GTP-dependent binding of aminoacyl-tRNA to the A-site of ribosomes during protein biosynthesis. This Blastocystis hominis protein is Elongation factor 1-alpha.